The primary structure comprises 168 residues: MPTLLLGASIPFGTIAYTLFIFLLLLVMLRKFAWGPLMGIMKEREEHVTNEIDAAERSNAEAKKLVEEQREMLKQSRVEAQELIERAKKQAVDQKDVIVAAAKEEAESIKTSAVQEIQREKEQAIAALQEQVASLSVHIASKVIEKELKEEDQVKLIRDYIKEVGEAR.

Residues 9-29 (SIPFGTIAYTLFIFLLLLVML) form a helical membrane-spanning segment.

This sequence belongs to the ATPase B chain family. In terms of assembly, F-type ATPases have 2 components, F(1) - the catalytic core - and F(0) - the membrane proton channel. F(1) has five subunits: alpha(3), beta(3), gamma(1), delta(1), epsilon(1). F(0) has three main subunits: a(1), b(2) and c(10-14). The alpha and beta chains form an alternating ring which encloses part of the gamma chain. F(1) is attached to F(0) by a central stalk formed by the gamma and epsilon chains, while a peripheral stalk is formed by the delta and b chains.

The protein resides in the cell membrane. F(1)F(0) ATP synthase produces ATP from ADP in the presence of a proton or sodium gradient. F-type ATPases consist of two structural domains, F(1) containing the extramembraneous catalytic core and F(0) containing the membrane proton channel, linked together by a central stalk and a peripheral stalk. During catalysis, ATP synthesis in the catalytic domain of F(1) is coupled via a rotary mechanism of the central stalk subunits to proton translocation. In terms of biological role, component of the F(0) channel, it forms part of the peripheral stalk, linking F(1) to F(0). The protein is ATP synthase subunit b of Bacillus mycoides (strain KBAB4) (Bacillus weihenstephanensis).